The chain runs to 502 residues: MFGDRQRPMVLVLGLGESGLAIARWCARHGCRLRIADTREAPPNLAALQAEGIDAEFVGGPFTPSLLDGGVEIVGLSPGLSPLEPALAALIAAANERAIAVWGELEFFAQALRALGTSGYQPKVLAITGTNGKTTTTNLTGLLCQRSGKKVAVAGNISPAMLDRLARAIDETALPDVWVLELSSFQLETARTFAPDAAAILNITQDHLDWHGSFDAYAAAKGRVFGATTTRVLNRDDAAVMKFAPAAGAADAARTVTFGLNEPAQQGDYGLSRDNGIAWLVEAVDRDAPDETTSRRRKRDGVHTPDIAQKRLMPADALRIRGLHNAANALAAFALARAIDLPAAPLLHALREYRGEAHRVEVIATIDDVDYVDDSKGTNVGATVAALDGLAQKIVLIAGGDGKGQDFAPLVAPVARWCRAVMLIGRDAPAIRDTLAETGVPLADHATLEAAVHAAAELAEPGDAVLLSPACASLDMFRNYAHRADVFRAAVDEIAIDKGATT.

An ATP-binding site is contributed by 129–135 (GTNGKTT).

The protein belongs to the MurCDEF family.

The protein resides in the cytoplasm. It carries out the reaction UDP-N-acetyl-alpha-D-muramoyl-L-alanine + D-glutamate + ATP = UDP-N-acetyl-alpha-D-muramoyl-L-alanyl-D-glutamate + ADP + phosphate + H(+). Its pathway is cell wall biogenesis; peptidoglycan biosynthesis. Cell wall formation. Catalyzes the addition of glutamate to the nucleotide precursor UDP-N-acetylmuramoyl-L-alanine (UMA). This chain is UDP-N-acetylmuramoylalanine--D-glutamate ligase, found in Burkholderia ambifaria (strain MC40-6).